The primary structure comprises 251 residues: Segregation and condensation protein A (251 aa).

It belongs to the ScpA family. In terms of assembly, component of a cohesin-like complex composed of ScpA, ScpB and the Smc homodimer, in which ScpA and ScpB bind to the head domain of Smc. The presence of the three proteins is required for the association of the complex with DNA.

It is found in the cytoplasm. In terms of biological role, participates in chromosomal partition during cell division. May act via the formation of a condensin-like complex containing Smc and ScpB that pull DNA away from mid-cell into both cell halves. This chain is Segregation and condensation protein A, found in Clostridium botulinum (strain Alaska E43 / Type E3).